A 197-amino-acid polypeptide reads, in one-letter code: Probable host range protein 2 (197 aa).

Positions 172-197 (DHDDNDNADDDEEDDDEVNDIEDDYE) are disordered. Residues 174 to 197 (DDNDNADDDEEDDDEVNDIEDDYE) are compositionally biased toward acidic residues.

This sequence belongs to the poxviridae C7 protein family.

The chain is Probable host range protein 2 from Ovis aries (Sheep).